Consider the following 243-residue polypeptide: uncharacterized protein (243 aa).

Belongs to the mycobacterial PPE family.

It is found in the cell membrane. This is an uncharacterized protein from Mycobacterium tuberculosis (strain CDC 1551 / Oshkosh).